The chain runs to 574 residues: Pyruvate kinase PKLR (574 aa).

4 positions are modified to phosphoserine: serine 2, serine 19, serine 26, and serine 43. Arginine 116 is a binding site for substrate. Residues asparagine 118, serine 120, aspartate 156, and threonine 157 each contribute to the K(+) site. 118–121 (NFSH) is a binding site for ATP. Residues arginine 163 and lysine 250 each contribute to the ATP site. Residue serine 292 is modified to Phosphoserine. Lysine 313 provides a ligand contact to substrate. Glutamate 315 provides a ligand contact to Mn(2+). Glycine 338, aspartate 339, and threonine 371 together coordinate substrate. A Mn(2+)-binding site is contributed by aspartate 339. Beta-D-fructose 1,6-bisphosphate is bound by residues 475 to 480 (TKTGRS), tryptophan 525, arginine 532, and 559 to 564 (RPGSGY).

Belongs to the pyruvate kinase family. In terms of assembly, homotetramer. It depends on Mg(2+) as a cofactor. Mn(2+) serves as cofactor. The cofactor is K(+).

It carries out the reaction pyruvate + ATP = phosphoenolpyruvate + ADP + H(+). It participates in carbohydrate degradation; glycolysis; pyruvate from D-glyceraldehyde 3-phosphate: step 5/5. Its activity is regulated as follows. Allosterically activated by fructose 1,6-bisphosphate. Pyruvate kinase that catalyzes the conversion of phosphoenolpyruvate to pyruvate with the synthesis of ATP, and which plays a key role in glycolysis. The protein is Pyruvate kinase PKLR (Pklr) of Rattus norvegicus (Rat).